The primary structure comprises 845 residues: Envelope glycoprotein B (845 aa).

An N-terminal signal peptide occupies residues 1-26 (MTPRSRLATLGTVILLVCFCAGAAHS). The Virion surface portion of the chain corresponds to 27-732 (RGDTFQTSSS…TGFINFIKHP (706 aa)). A disordered region spans residues 29–57 (DTFQTSSSPTPPGSSSKAPTKPGEEASGP). Residues 33–49 (TSSSPTPPGSSSKAPTK) show a composition bias toward low complexity. Disulfide bonds link Cys68-Cys528, Cys85-Cys484, Cys157-Cys222, Cys315-Cys362, and Cys550-Cys587. Residues 124–130 (VYRGLTE) form an involved in fusion and/or binding to host membrane region. The N-linked (GlcNAc...) asparagine; by host glycan is linked to Asn179. Residues 208–216 (GWFPGIYRV) are involved in fusion and/or binding to host membrane. Residues Asn254, Asn275, Asn355, Asn368, Asn372, Asn385, and Asn408 are each glycosylated (N-linked (GlcNAc...) asparagine; by host). The segment at 411-451 (HAQGDSGNPTSSPPPSASPMTTSASRRKRRSASTAAAGGGG) is disordered. 5 N-linked (GlcNAc...) asparagine; by host glycosylation sites follow: Asn455, Asn562, Asn599, Asn614, and Asn628. The segment at 678-730 (LDNTIDMNKERFVRDLSEIVADLGGIGKTVVNVASSVVTLCGSLVTGFINFIK) is hydrophobic membrane proximal region. Residues 733–753 (LGGMLMIIIVIAIILIIFMLS) form a helical membrane-spanning segment. The Intravirion portion of the chain corresponds to 754–845 (RRTNTIAQAP…SLDISPETGE (92 aa)). The interval 802–845 (RQKADDLKKSTPSVFQRTANGLRQRLRGYKPLTQSLDISPETGE) is disordered. A compositionally biased stretch (polar residues) spans 811–822 (STPSVFQRTANG). Residues 830 to 833 (YKPL) carry the Internalization motif motif.

It belongs to the herpesviridae glycoprotein B family. Homotrimer; disulfide-linked. Binds to heparan sulfate proteoglycans. Interacts with gH/gL heterodimer. Interacts with host ITGAV-ITGB3; this interaction mediates viral entry. In terms of processing, a proteolytic cleavage by host furin generates two subunits that remain linked by disulfide bonds.

It is found in the virion membrane. Its subcellular location is the host cell membrane. It localises to the host endosome membrane. The protein resides in the host Golgi apparatus membrane. Functionally, envelope glycoprotein that forms spikes at the surface of the virion envelope. Participates in viral entry through an RGD motif that binds ITGAV-ITGB3. Membrane fusion is mediated by the fusion machinery composed at least of gB and the heterodimer gH/gL. May be involved in the fusion between the virion envelope and the outer nuclear membrane during virion egress. The polypeptide is Envelope glycoprotein B (Homo sapiens (Human)).